A 130-amino-acid chain; its full sequence is Small ribosomal subunit protein uS9 (130 aa).

The protein belongs to the universal ribosomal protein uS9 family.

The chain is Small ribosomal subunit protein uS9 from Bordetella bronchiseptica (strain ATCC BAA-588 / NCTC 13252 / RB50) (Alcaligenes bronchisepticus).